A 122-amino-acid polypeptide reads, in one-letter code: Large ribosomal subunit protein uL14 (122 aa).

The protein belongs to the universal ribosomal protein uL14 family. As to quaternary structure, part of the 50S ribosomal subunit. Forms a cluster with proteins L3 and L19. In the 70S ribosome, L14 and L19 interact and together make contacts with the 16S rRNA in bridges B5 and B8.

Binds to 23S rRNA. Forms part of two intersubunit bridges in the 70S ribosome. This chain is Large ribosomal subunit protein uL14, found in Cupriavidus taiwanensis (strain DSM 17343 / BCRC 17206 / CCUG 44338 / CIP 107171 / LMG 19424 / R1) (Ralstonia taiwanensis (strain LMG 19424)).